A 466-amino-acid chain; its full sequence is Methylenetetrahydrofolate--tRNA-(uracil-5-)-methyltransferase TrmFO (466 aa).

16–21 (GGGMAG) serves as a coordination point for FAD.

The protein belongs to the MnmG family. TrmFO subfamily. It depends on FAD as a cofactor.

The protein localises to the cytoplasm. It catalyses the reaction uridine(54) in tRNA + (6R)-5,10-methylene-5,6,7,8-tetrahydrofolate + NADH + H(+) = 5-methyluridine(54) in tRNA + (6S)-5,6,7,8-tetrahydrofolate + NAD(+). The enzyme catalyses uridine(54) in tRNA + (6R)-5,10-methylene-5,6,7,8-tetrahydrofolate + NADPH + H(+) = 5-methyluridine(54) in tRNA + (6S)-5,6,7,8-tetrahydrofolate + NADP(+). Catalyzes the folate-dependent formation of 5-methyl-uridine at position 54 (M-5-U54) in all tRNAs. This chain is Methylenetetrahydrofolate--tRNA-(uracil-5-)-methyltransferase TrmFO, found in Maricaulis maris (strain MCS10) (Caulobacter maris).